A 62-amino-acid chain; its full sequence is Amolopin-P2 (62 aa).

A signal peptide spans 1–22; it reads MFTLKKSLLLLFFLGTISLSLC. Positions 23–44 are excised as a propeptide; the sequence is EQERGADEEENGGEVTEQEVKR.

This sequence belongs to the frog skin active peptide (FSAP) family. Amolopin subfamily. As to expression, expressed by the skin glands.

It localises to the secreted. Functionally, antimicrobial peptide with activity against Gram-positive bacteria. Has been tested against S.aureus (MIC=37.5 ug/mL), against B.pumilus (MIC=75.0 ug/mL), B.cereus (no activity detected). Does not show activity against Gram-negative bacteria (E.coli, B.dysenteriae, A.calcoaceticus, P.aeruginosa) and fungi (C.albicans). Does not show hemolytic activity against rabbit erythrocytes. The chain is Amolopin-P2 from Amolops loloensis (Lolokou Sucker Frog).